The following is a 363-amino-acid chain: tRNA U34 carboxymethyltransferase (363 aa).

Carboxy-S-adenosyl-L-methionine-binding positions include Lys101, Trp134, Lys139, Gly159, 181–183 (DPS), 221–222 (LE), Met237, Tyr241, and Arg356.

This sequence belongs to the class I-like SAM-binding methyltransferase superfamily. CmoB family. As to quaternary structure, homotetramer.

The enzyme catalyses carboxy-S-adenosyl-L-methionine + 5-hydroxyuridine(34) in tRNA = 5-carboxymethoxyuridine(34) in tRNA + S-adenosyl-L-homocysteine + H(+). In terms of biological role, catalyzes carboxymethyl transfer from carboxy-S-adenosyl-L-methionine (Cx-SAM) to 5-hydroxyuridine (ho5U) to form 5-carboxymethoxyuridine (cmo5U) at position 34 in tRNAs. This is tRNA U34 carboxymethyltransferase from Psychrobacter cryohalolentis (strain ATCC BAA-1226 / DSM 17306 / VKM B-2378 / K5).